A 262-amino-acid chain; its full sequence is PsbP domain-containing protein 6, chloroplastic (262 aa).

A disulfide bridge connects residues C128 and C132.

Belongs to the PsbP family.

Its subcellular location is the plastid. The protein resides in the chloroplast thylakoid lumen. Functionally, may be involved in the redox regulation of photosystem II. The chain is PsbP domain-containing protein 6, chloroplastic (PPD6) from Arabidopsis thaliana (Mouse-ear cress).